A 275-amino-acid polypeptide reads, in one-letter code: 3-methyl-2-oxobutanoate hydroxymethyltransferase (275 aa).

2 residues coordinate Mg(2+): D44 and D83. 3-methyl-2-oxobutanoate contacts are provided by residues 44 to 45 (DS), D83, and K113. E115 contributes to the Mg(2+) binding site. The active-site Proton acceptor is E182.

This sequence belongs to the PanB family. As to quaternary structure, homodecamer; pentamer of dimers. It depends on Mg(2+) as a cofactor.

It localises to the cytoplasm. It catalyses the reaction 3-methyl-2-oxobutanoate + (6R)-5,10-methylene-5,6,7,8-tetrahydrofolate + H2O = 2-dehydropantoate + (6S)-5,6,7,8-tetrahydrofolate. It participates in cofactor biosynthesis; (R)-pantothenate biosynthesis; (R)-pantoate from 3-methyl-2-oxobutanoate: step 1/2. Functionally, catalyzes the reversible reaction in which hydroxymethyl group from 5,10-methylenetetrahydrofolate is transferred onto alpha-ketoisovalerate to form ketopantoate. This Clostridium botulinum (strain Kyoto / Type A2) protein is 3-methyl-2-oxobutanoate hydroxymethyltransferase.